We begin with the raw amino-acid sequence, 199 residues long: NAD(P)H-quinone oxidoreductase subunit 6, chloroplastic (199 aa).

A run of 5 helical transmembrane segments spans residues 13-33, 35-55, 64-84, 96-118, and 157-177; these read AILL…VLFT, IVYS…LYIL, VQIL…VMLI, WTVG…IAAI, and LPFE…ITMA.

It belongs to the complex I subunit 6 family. As to quaternary structure, NDH is composed of at least 16 different subunits, 5 of which are encoded in the nucleus.

Its subcellular location is the plastid. The protein resides in the chloroplast thylakoid membrane. The enzyme catalyses a plastoquinone + NADH + (n+1) H(+)(in) = a plastoquinol + NAD(+) + n H(+)(out). The catalysed reaction is a plastoquinone + NADPH + (n+1) H(+)(in) = a plastoquinol + NADP(+) + n H(+)(out). NDH shuttles electrons from NAD(P)H:plastoquinone, via FMN and iron-sulfur (Fe-S) centers, to quinones in the photosynthetic chain and possibly in a chloroplast respiratory chain. The immediate electron acceptor for the enzyme in this species is believed to be plastoquinone. Couples the redox reaction to proton translocation, and thus conserves the redox energy in a proton gradient. In Huperzia lucidula (Shining clubmoss), this protein is NAD(P)H-quinone oxidoreductase subunit 6, chloroplastic (ndhG).